Here is a 219-residue protein sequence, read N- to C-terminus: Thiopurine S-methyltransferase (219 aa).

4 residues coordinate S-adenosyl-L-methionine: W10, L45, E66, and R123.

Belongs to the class I-like SAM-binding methyltransferase superfamily. TPMT family.

The protein resides in the cytoplasm. It catalyses the reaction S-adenosyl-L-methionine + a thiopurine = S-adenosyl-L-homocysteine + a thiopurine S-methylether.. This Shewanella pealeana (strain ATCC 700345 / ANG-SQ1) protein is Thiopurine S-methyltransferase.